Here is a 245-residue protein sequence, read N- to C-terminus: tRNA (guanine-N(1)-)-methyltransferase (245 aa).

S-adenosyl-L-methionine-binding positions include Gly113 and 133-138; that span reads IGDYVL.

The protein belongs to the RNA methyltransferase TrmD family. In terms of assembly, homodimer.

It localises to the cytoplasm. It catalyses the reaction guanosine(37) in tRNA + S-adenosyl-L-methionine = N(1)-methylguanosine(37) in tRNA + S-adenosyl-L-homocysteine + H(+). Its function is as follows. Specifically methylates guanosine-37 in various tRNAs. The protein is tRNA (guanine-N(1)-)-methyltransferase of Actinobacillus succinogenes (strain ATCC 55618 / DSM 22257 / CCUG 43843 / 130Z).